Consider the following 218-residue polypeptide: Cytochrome b6 (218 aa).

The chain crosses the membrane as a helical span at residues 35–55 (IFYCLGGITLVCFLIQFATGF). Residue cysteine 38 coordinates heme c. Heme b contacts are provided by histidine 89 and histidine 103. 3 helical membrane passes run 93 to 113 (ASMM…TGGF), 119 to 139 (LTWV…VTGY), and 189 to 209 (LHTF…FLMI). Positions 190 and 205 each coordinate heme b.

It belongs to the cytochrome b family. PetB subfamily. As to quaternary structure, the 4 large subunits of the cytochrome b6-f complex are cytochrome b6, subunit IV (17 kDa polypeptide, PetD), cytochrome f and the Rieske protein, while the 4 small subunits are PetG, PetL, PetM and PetN. The complex functions as a dimer. It depends on heme b as a cofactor. The cofactor is heme c.

It is found in the cellular thylakoid membrane. Functionally, component of the cytochrome b6-f complex, which mediates electron transfer between photosystem II (PSII) and photosystem I (PSI), cyclic electron flow around PSI, and state transitions. The sequence is that of Cytochrome b6 from Synechococcus sp. (strain CC9605).